The sequence spans 213 residues: Serine acetyltransferase (213 aa).

It belongs to the transferase hexapeptide repeat family.

The protein resides in the cytoplasm. The enzyme catalyses L-serine + acetyl-CoA = O-acetyl-L-serine + CoA. It participates in amino-acid biosynthesis; L-cysteine biosynthesis; L-cysteine from L-serine: step 1/2. This Staphylococcus epidermidis (strain ATCC 35984 / DSM 28319 / BCRC 17069 / CCUG 31568 / BM 3577 / RP62A) protein is Serine acetyltransferase (cysE).